Reading from the N-terminus, the 44-residue chain is Mu-conotoxin-like Cal 12.1.2h (44 aa).

Cystine bridges form between Cys3–Cys16, Cys11–Cys28, Cys18–Cys33, and Cys27–Cys38. Trp17 bears the 6'-bromotryptophan mark. Pro23 bears the 4-hydroxyproline mark. 6'-bromotryptophan occurs at positions 36 and 37. Position 39 is a 4-hydroxyproline (Pro39). Trp43 carries the 6'-bromotryptophan modification.

Expressed by the venom duct.

It is found in the secreted. In terms of biological role, mu-conotoxins block voltage-gated sodium channels. This toxin reversibly blocks voltage-gated sodium channel in cephalopods, with no alteration in the voltage dependence of sodium conductance or on the kinetics of inactivation. This Californiconus californicus (California cone) protein is Mu-conotoxin-like Cal 12.1.2h.